The following is a 174-amino-acid chain: MASLSVSSSSTIIDSRAPPSRLASASASSPSCISLPTLPIQSHTRAAKATAYCRKIVRNVVTRATTEVGEAPATTTEAETTELPEIVKTAQEAWEKVDDKYAIGSLAFAGVVALWGSAGMISAIDRLPLVPGVLELVGIGYTGWFTYKNLVFKPDREALFEKVKSTYKDILGSS.

Residues 1-20 (MASLSVSSSSTIIDSRAPPS) form a disordered region. A chloroplast-targeting transit peptide spans 1-63 (MASLSVSSSS…RKIVRNVVTR (63 aa)). Alanine 64 carries the post-translational modification N-acetylalanine. Residues 64-100 (ATTEVGEAPATTTEAETTELPEIVKTAQEAWEKVDDK) lie on the Stromal side of the membrane. Residues 101-121 (YAIGSLAFAGVVALWGSAGMI) form a helical membrane-spanning segment. Residues 122–126 (SAIDR) are Lumenal-facing. A helical membrane pass occupies residues 127–147 (LPLVPGVLELVGIGYTGWFTY). Residues 148-174 (KNLVFKPDREALFEKVKSTYKDILGSS) lie on the Stromal side of the membrane.

This sequence belongs to the CURT family. Homo- and heterodimers and trimers. Interacts with PSAL. In terms of processing, phosphorylated on either Thr-65 or Thr-66 by a threonine specific thylakoid kinase.

It is found in the plastid. Its subcellular location is the chloroplast thylakoid membrane. Its function is as follows. Determines thylakoid architecture by inducing membrane curvature. The polypeptide is Protein CURVATURE THYLAKOID 1B, chloroplastic (CURT1B) (Arabidopsis thaliana (Mouse-ear cress)).